The following is a 119-amino-acid chain: Fluoride-specific ion channel FluC 2 (119 aa).

4 consecutive transmembrane segments (helical) span residues 1-21 (MITV…RYGI), 33-53 (FPYA…FIFS), 56-76 (FSPF…TTFS), and 93-113 (VFTL…FLGY). Na(+) is bound by residues glycine 70 and threonine 73.

It belongs to the fluoride channel Fluc/FEX (TC 1.A.43) family.

Its subcellular location is the cell membrane. The enzyme catalyses fluoride(in) = fluoride(out). Its activity is regulated as follows. Na(+) is not transported, but it plays an essential structural role and its presence is essential for fluoride channel function. Functionally, fluoride-specific ion channel. Important for reducing fluoride concentration in the cell, thus reducing its toxicity. This Lactobacillus johnsonii (strain CNCM I-12250 / La1 / NCC 533) protein is Fluoride-specific ion channel FluC 2.